A 259-amino-acid chain; its full sequence is Keratinocyte-associated transmembrane protein 2 (259 aa).

The first 44 residues, 1–44, serve as a signal peptide directing secretion; the sequence is MAASALGRMCGAAREKLSPGPGARGLGALARSLVLALLLVPVLC. Residues 45 to 190 are Extracellular-facing; the sequence is SDRSENPPNN…VKLPPPNRED (146 aa). The interval 47–155 is disordered; that stretch reads RSENPPNNAT…YDWTTNPRDE (109 aa). A compositionally biased stretch (polar residues) spans 50–81; that stretch reads NPPNNATVSSPVVVTAPGNHTSPSVSQISTTL. N-linked (GlcNAc...) asparagine glycans are attached at residues asparagine 54 and asparagine 68. A compositionally biased stretch (low complexity) spans 82 to 104; sequence SPASAEKSGSSSAAPTPTAAPSA. Acidic residues predominate over residues 105–122; the sequence is PEEEADSNEDPSMEEEDL. Position 165 is a phosphoserine (serine 165). A helical transmembrane segment spans residues 191–211; that stretch reads SHFFFHLLIFAFCAAVVYVTY. Residues 212-259 lie on the Cytoplasmic side of the membrane; sequence HNKRKIFLLVQSRKWRDGLCSKTVEYHRLDQNVNEAMPSLKITNDYIF. Serine 223 and serine 250 each carry phosphoserine.

Its subcellular location is the membrane. In Mus musculus (Mouse), this protein is Keratinocyte-associated transmembrane protein 2 (Kct2).